We begin with the raw amino-acid sequence, 534 residues long: Pentatricopeptide repeat-containing protein At5g59600 (534 aa).

PPR repeat units lie at residues 50-80, 81-115, 116-150, 151-181, 182-216, 217-251, 252-286, 287-321, 322-352, 353-387, 388-418, and 424-454; these read LTRI…MPKR, DISG…GLKL, DAFI…SYES, DAFI…LGEQ, DLVV…GIKP, DVIT…GYKP, DVVS…GLYP, NSAT…GLED, HGFV…TPKK, TTVT…GEKL, DHLT…MQNK, and RLEH…MRME. The interval 459–534 is type E motif; that stretch reads VWGALLAACR…FLGSSWVETV (76 aa).

Belongs to the PPR family. PCMP-E subfamily.

The protein is Pentatricopeptide repeat-containing protein At5g59600 (PCMP-E1) of Arabidopsis thaliana (Mouse-ear cress).